The primary structure comprises 438 residues: Aspartate--tRNA(Asp) ligase (438 aa).

Position 170 (Glu-170) interacts with L-aspartate. Residues 192–195 are aspartate; the sequence is QLYK. Arg-214 is an L-aspartate binding site. ATP contacts are provided by residues 214-216, 222-224, and Glu-361; these read RAE and RHL. 2 residues coordinate Mg(2+): Glu-361 and Ser-364. Residues Ser-364 and Arg-368 each coordinate L-aspartate. Residue 409–412 participates in ATP binding; that stretch reads GAER.

The protein belongs to the class-II aminoacyl-tRNA synthetase family. Type 2 subfamily. Homodimer. It depends on Mg(2+) as a cofactor.

It localises to the cytoplasm. It carries out the reaction tRNA(Asp) + L-aspartate + ATP = L-aspartyl-tRNA(Asp) + AMP + diphosphate. Catalyzes the attachment of L-aspartate to tRNA(Asp) in a two-step reaction: L-aspartate is first activated by ATP to form Asp-AMP and then transferred to the acceptor end of tRNA(Asp). The polypeptide is Aspartate--tRNA(Asp) ligase (Pyrococcus horikoshii (strain ATCC 700860 / DSM 12428 / JCM 9974 / NBRC 100139 / OT-3)).